We begin with the raw amino-acid sequence, 533 residues long: GDP-fucose protein O-fucosyltransferase 4 (533 aa).

Residues 1–20 (MSAGCTQLVWGGRLHWGASH) lie on the Cytoplasmic side of the membrane. The helical; Signal-anchor for type II membrane protein transmembrane segment at 21–37 (LLSCLLALCALWVLAAA) threads the bilayer. The Lumenal segment spans residues 38-533 (EPTEGGSANV…ETYIKRSMNH (496 aa)). 3 N-linked (GlcNAc...) asparagine glycosylation sites follow: Asn148, Asn206, and Asn358. The cysteines at positions 429 and 432 are disulfide-linked. Residue Asn511 is glycosylated (N-linked (GlcNAc...) asparagine).

The protein belongs to the glycosyltransferase 10 family.

The protein localises to the endoplasmic reticulum membrane. The enzyme catalyses L-threonyl-[protein] + GDP-beta-L-fucose = 3-O-(alpha-L-fucosyl)-L-threonyl-[protein] + GDP + H(+). It carries out the reaction L-seryl-[protein] + GDP-beta-L-fucose = 3-O-(alpha-L-fucosyl)-L-seryl-[protein] + GDP + H(+). The protein operates within protein modification; protein glycosylation. Protein O-fucosyltransferase that specifically catalyzes O-fucosylation of serine or threonine residues in EMI domains of target proteins. Attaches fucose through an O-glycosidic linkage. O-fucosylation of EMI domain-containing proteins may be required for facilitating protein folding and secretion. This is GDP-fucose protein O-fucosyltransferase 4 (fut11) from Xenopus tropicalis (Western clawed frog).